The sequence spans 32 residues: Photosystem I reaction center subunit XII (32 aa).

Residues 10-27 (VVALVSAFVTGILALRLG) form a helical membrane-spanning segment.

This sequence belongs to the PsaM family.

Its subcellular location is the plastid. The protein resides in the chloroplast thylakoid membrane. This is Photosystem I reaction center subunit XII from Staurastrum punctulatum (Green alga).